Here is a 644-residue protein sequence, read N- to C-terminus: Exoribonuclease 2 (644 aa).

An RNB domain is found at 190–516 (REDLTALDFI…INHRLLKALI (327 aa)). Residues 562 to 644 (DSRFAAEIID…ENRSVIARPV (83 aa)) enclose the S1 motif domain.

Belongs to the RNR ribonuclease family. RNase II subfamily.

It localises to the cytoplasm. The enzyme catalyses Exonucleolytic cleavage in the 3'- to 5'-direction to yield nucleoside 5'-phosphates.. Its function is as follows. Involved in mRNA degradation. Hydrolyzes single-stranded polyribonucleotides processively in the 3' to 5' direction. This is Exoribonuclease 2 from Sodalis glossinidius (strain morsitans).